Here is a 214-residue protein sequence, read N- to C-terminus: GTP cyclohydrolase 1 (214 aa).

The Zn(2+) site is built by cysteine 101, histidine 104, and cysteine 172.

The protein belongs to the GTP cyclohydrolase I family. Toroid-shaped homodecamer, composed of two pentamers of five dimers.

The catalysed reaction is GTP + H2O = 7,8-dihydroneopterin 3'-triphosphate + formate + H(+). It functions in the pathway cofactor biosynthesis; 7,8-dihydroneopterin triphosphate biosynthesis; 7,8-dihydroneopterin triphosphate from GTP: step 1/1. In Gloeobacter violaceus (strain ATCC 29082 / PCC 7421), this protein is GTP cyclohydrolase 1.